A 94-amino-acid polypeptide reads, in one-letter code: Mobilization protein C (94 aa).

In terms of assembly, interacts with MobA and MobB to form the relaxosome.

Its function is as follows. This protein is essential to promote the specific transfer of the plasmid in the presence of conjugative plasmids. This is Mobilization protein C (mobC) from Escherichia coli.